The following is a 226-amino-acid chain: UPF0758 protein GTNG_2548 (226 aa).

The MPN domain occupies 104-226 (VIRCPEDGAK…FISLKEKGYV (123 aa)). 3 residues coordinate Zn(2+): His-175, His-177, and Asp-188. The short motif at 175–188 (HNHPSGDPTPSRED) is the JAMM motif element.

It belongs to the UPF0758 family.

The sequence is that of UPF0758 protein GTNG_2548 from Geobacillus thermodenitrificans (strain NG80-2).